Consider the following 467-residue polypeptide: Dihydrolipoyl dehydrogenase (467 aa).

Residues 33 to 41, lysine 50, and glycine 113 each bind FAD; that span reads EPKYWGGIC. Cysteines 41 and 46 form a disulfide. Residues 181–185, glutamate 204, and 269–272 each bind NAD(+); these read GAGAI and AIGF. Residues aspartate 312 and alanine 320 each contribute to the FAD site. Histidine 446 serves as the catalytic Proton acceptor.

It belongs to the class-I pyridine nucleotide-disulfide oxidoreductase family. In terms of assembly, homodimer. Part of the PDH complex, consisting of multiple copies of AceE (E1), DlaT (E2) and Lpd (E3), and of the BCKADH complex, consisting of multiple copies of BkdA/BkdB (E1), BkdC (E2) and Lpd (E3). The cofactor is FAD.

The protein localises to the cytoplasm. The catalysed reaction is N(6)-[(R)-dihydrolipoyl]-L-lysyl-[protein] + NAD(+) = N(6)-[(R)-lipoyl]-L-lysyl-[protein] + NADH + H(+). Functionally, lipoamide dehydrogenase is a component of the alpha-ketoacid dehydrogenase complexes. Catalyzes the reoxidation of dihydrolipoyl groups which are covalently attached to the lipoate acyltransferase components (E2) of the complexes. In Mycobacterium leprae (strain TN), this protein is Dihydrolipoyl dehydrogenase (lpd).